A 304-amino-acid chain; its full sequence is Phosphoribosylaminoimidazole-succinocarboxamide synthase (304 aa).

It belongs to the SAICAR synthetase family.

The enzyme catalyses 5-amino-1-(5-phospho-D-ribosyl)imidazole-4-carboxylate + L-aspartate + ATP = (2S)-2-[5-amino-1-(5-phospho-beta-D-ribosyl)imidazole-4-carboxamido]succinate + ADP + phosphate + 2 H(+). It participates in purine metabolism; IMP biosynthesis via de novo pathway; 5-amino-1-(5-phospho-D-ribosyl)imidazole-4-carboxamide from 5-amino-1-(5-phospho-D-ribosyl)imidazole-4-carboxylate: step 1/2. In Streptomyces griseus subsp. griseus (strain JCM 4626 / CBS 651.72 / NBRC 13350 / KCC S-0626 / ISP 5235), this protein is Phosphoribosylaminoimidazole-succinocarboxamide synthase.